A 176-amino-acid polypeptide reads, in one-letter code: Large ribosomal subunit protein uL16 (176 aa).

The protein belongs to the universal ribosomal protein uL16 family.

This chain is Large ribosomal subunit protein uL16, found in Picrophilus torridus (strain ATCC 700027 / DSM 9790 / JCM 10055 / NBRC 100828 / KAW 2/3).